The sequence spans 133 residues: Glycine cleavage system H protein (133 aa).

The region spanning 30–112 (TITVGITHHA…YGAGWFFKIK (83 aa)) is the Lipoyl-binding domain. Lys71 carries the N6-lipoyllysine modification.

The protein belongs to the GcvH family. As to quaternary structure, the glycine cleavage system is composed of four proteins: P, T, L and H. (R)-lipoate is required as a cofactor.

Its function is as follows. The glycine cleavage system catalyzes the degradation of glycine. The H protein shuttles the methylamine group of glycine from the P protein to the T protein. This Neisseria gonorrhoeae (strain ATCC 700825 / FA 1090) protein is Glycine cleavage system H protein.